A 335-amino-acid polypeptide reads, in one-letter code: Deoxyhypusine hydroxylase (335 aa).

5 HEAT-like PBS-type repeats span residues Leu71–Asp97, Cys104–Asn130, Leu200–Asp233, Phe238–Asn264, and Val271–Asp298. Fe cation contacts are provided by His73, Glu74, His106, and Glu107. 4 residues coordinate Fe cation: His240, Glu241, His273, and Glu274.

It belongs to the deoxyhypusine hydroxylase family. It depends on Fe(2+) as a cofactor.

The protein resides in the cytoplasm. Its subcellular location is the nucleus. It catalyses the reaction [eIF5A protein]-deoxyhypusine + AH2 + O2 = [eIF5A protein]-hypusine + A + H2O. It functions in the pathway protein modification; eIF5A hypusination. Catalyzes the hydroxylation of the N(6)-(4-aminobutyl)-L-lysine intermediate to form hypusine, an essential post-translational modification only found in mature eIF-5A factor. The protein is Deoxyhypusine hydroxylase (lia1) of Aspergillus fumigatus (strain ATCC MYA-4609 / CBS 101355 / FGSC A1100 / Af293) (Neosartorya fumigata).